We begin with the raw amino-acid sequence, 1388 residues long: MASSVTACQGASPYQPRNYQLEMLEASMKENIIVAMDTGSGKTHIAVLRIKAELDICPPDKLVWFLAPTVALCIQQHEVIASNLPAVRTRTLTGLDKVELWTEQSIWDAVLNGYRVIVSTHAVLADALSHGFVKMSRLALLIFDEAHHCTRRHAANKIMRDFYHPTLTKSGPGAVPRIMGLTASPVVRSNHQELLTVESNLDAVCRTPRVHRQELVKFTHRPHLQQIWYTPTDPAGFKSASQTLGALYHAWETLDIGDDPYIQRLRKSPLDDTALKKALLTGKTYCREQLRRFVDRSRHIFEELGEWAAEYYIYASIKQLGDRVRNSYMSGDWDEAEKAYLVDFLSKIPASEIQLALNDPGSFRISPKFESLLNFLDSLDEREFSGLIFVKQRATVSAMTSLLSVHPCTRERFRCAAYVGWSNGSASKDILGDLLNMQLQRDTLDDFRSGRKNLIIATDVLEEGIDISACSVVVCYDKPPNLKSFVQRRGRARRKQSTFAIMFPTDDASADVSKWQDLEQAMIEAYQDDERQLQSVSALESLDEEVMERLTVESTSAVLTADMAMAHLHHFCAVLPPQPYADMRPVFSFETNEDGLLKGTVILPSCVHPKVRRTEGRRWWRTERAAMKETAFQAYKALYEFGLVNDHLLPLTKRPELKSHDLGAMPSILETSEQYDPWIEWAYSWSSPDIHQSRIVVRMNEGRGDELCMRLMGPTYLPPLSPMTLFWNNSTTFTVTFEAAERVPLVPLSSVEDMRAITALYLKATNSRVCSSERDFTALFAPDLHHTELKGWLNAYEGCDPAMEVYSRGHNPLLMGVVRDHSRYGEPFLFRKWLVSDQNPSCSVVELECAPFPHRRNLLHRQRLANSQVDVDEETPESAAKNPIVAADACTIDRLPFTMAIFGLFISAIVERLETELIATRLRETILRDVGFKSTDHIITAISTPFAHALTNYQRYEFLGDSILKFSVSCQLFFQHPNWHEGYLSEGRAMIVQNPRLAKAALDTGLDAYIVTKRIASRKWSAPLISEKLERVPAKRQMSTKVLADVVEALIGAAYMDGGHATAQACIRRLLPEINLHAVDTRTATRSVAPESARHMMNERLKDHIGYTFEDESLLVEALTHPSCDYDSTTQSYQRLEYLGDAVLDMVIVSAIFNHPIQRPQGDMTKIKHAVVNANLLAFLCMESATSEEKLDVAQTSKDSFAVTTSQESVELWRFMRYRGQNLNAARDASLARHRALRDEIASSLLHAPHYPWHALSRLNADKFFSDIVESVLGAIFVDSGGDLAPCEVFVERIGLMAYLRRILDQEIDVRHPRSVAQQLAKTNIQFVLQRVPNEEGGASYQCSVRIEQAELFVVTGCLTAEEAEVTAAVEAIKFLTRDEGSTPLNTS.

The region spanning 23–203 (MLEASMKENI…LLTVESNLDA (181 aa)) is the Helicase ATP-binding domain. 36 to 43 (MDTGSGKT) contributes to the ATP binding site. The DEAH box motif lies at 144 to 147 (DEAH). Positions 371–537 (SLLNFLDSLD…DDERQLQSVS (167 aa)) constitute a Helicase C-terminal domain. In terms of domain architecture, Dicer dsRNA-binding fold spans 564 to 658 (AMAHLHHFCA…LPLTKRPELK (95 aa)). RNase III domains follow at residues 919–1059 (ATRL…MDGG) and 1098–1281 (NERL…VDSG). The Mg(2+) site is built by glutamate 1137, aspartate 1267, and glutamate 1270.

The protein belongs to the helicase family. Dicer subfamily. The cofactor is Mg(2+). It depends on Mn(2+) as a cofactor.

Its function is as follows. Dicer-like endonuclease involved in cleaving double-stranded RNA in the RNA interference (RNAi) pathway. Produces 21 to 25 bp dsRNAs (siRNAs) which target the selective destruction of homologous RNAs leading to sequence-specific suppression of gene expression, called post-transcriptional gene silencing (PTGS). Part of a broad host defense response against viral infection and transposons. The protein is Dicer-like protein 2 (dcl2) of Neosartorya fischeri (strain ATCC 1020 / DSM 3700 / CBS 544.65 / FGSC A1164 / JCM 1740 / NRRL 181 / WB 181) (Aspergillus fischerianus).